An 80-amino-acid chain; its full sequence is Small ribosomal subunit protein bS18c (80 aa).

Positions M1 to P19 are enriched in basic residues. Residues M1 to E24 form a disordered region.

This sequence belongs to the bacterial ribosomal protein bS18 family. As to quaternary structure, part of the 30S ribosomal subunit.

It localises to the plastid. It is found in the chloroplast. In Staurastrum punctulatum (Green alga), this protein is Small ribosomal subunit protein bS18c.